Reading from the N-terminus, the 470-residue chain is Glutamate--tRNA ligase (470 aa).

Residues 9–19 (PSPTGYLHVGG) carry the 'HIGH' region motif. The 'KMSKS' region signature appears at 236–240 (RLSKR). K239 contributes to the ATP binding site.

This sequence belongs to the class-I aminoacyl-tRNA synthetase family. Glutamate--tRNA ligase type 1 subfamily. Monomer.

The protein resides in the cytoplasm. It carries out the reaction tRNA(Glu) + L-glutamate + ATP = L-glutamyl-tRNA(Glu) + AMP + diphosphate. In terms of biological role, catalyzes the attachment of glutamate to tRNA(Glu) in a two-step reaction: glutamate is first activated by ATP to form Glu-AMP and then transferred to the acceptor end of tRNA(Glu). In Colwellia psychrerythraea (strain 34H / ATCC BAA-681) (Vibrio psychroerythus), this protein is Glutamate--tRNA ligase.